Reading from the N-terminus, the 239-residue chain is Purine nucleoside phosphorylase DeoD-type (239 aa).

His-5 lines the a purine D-ribonucleoside pocket. Phosphate is bound by residues Gly-21, Arg-25, Arg-44, and 88–91; that span reads RVGS. Residues 180-182 and 204-205 contribute to the a purine D-ribonucleoside site; these read EME and SD. Asp-205 serves as the catalytic Proton donor.

This sequence belongs to the PNP/UDP phosphorylase family. As to quaternary structure, homohexamer; trimer of homodimers.

It catalyses the reaction a purine D-ribonucleoside + phosphate = a purine nucleobase + alpha-D-ribose 1-phosphate. The enzyme catalyses a purine 2'-deoxy-D-ribonucleoside + phosphate = a purine nucleobase + 2-deoxy-alpha-D-ribose 1-phosphate. Catalyzes the reversible phosphorolytic breakdown of the N-glycosidic bond in the beta-(deoxy)ribonucleoside molecules, with the formation of the corresponding free purine bases and pentose-1-phosphate. This is Purine nucleoside phosphorylase DeoD-type from Cronobacter sakazakii (strain ATCC BAA-894) (Enterobacter sakazakii).